The sequence spans 160 residues: Cytochrome b6-f complex subunit 4 (160 aa).

The next 3 membrane-spanning stretches (helical) occupy residues 36 to 56 (LLYIFPVVILGTIACNVGLAV), 95 to 115 (LLGVLLMVSVPAGLLTVPFLE), and 131 to 151 (TVFLIGTAVALWLGIGATLPI).

This sequence belongs to the cytochrome b family. PetD subfamily. The 4 large subunits of the cytochrome b6-f complex are cytochrome b6, subunit IV (17 kDa polypeptide, petD), cytochrome f and the Rieske protein, while the 4 small subunits are petG, petL, petM and petN. The complex functions as a dimer.

The protein localises to the plastid. It localises to the chloroplast thylakoid membrane. Functionally, component of the cytochrome b6-f complex, which mediates electron transfer between photosystem II (PSII) and photosystem I (PSI), cyclic electron flow around PSI, and state transitions. This Solanum tuberosum (Potato) protein is Cytochrome b6-f complex subunit 4.